Reading from the N-terminus, the 535-residue chain is Dimethylaniline monooxygenase [N-oxide-forming] 2 (535 aa).

A2 carries the N-acetylalanine modification. Residues 9–13 (GAGVS), E32, 40–41 (VW), and 61–62 (NT) contribute to the FAD site. NADP(+) is bound by residues 60–61 (TN) and 195–198 (SGSD). Residue K492 forms a Glycyl lysine isopeptide (Lys-Gly) (interchain with G-Cter in SUMO) linkage. A helical membrane pass occupies residues 510 to 530 (FPVSFLLKILGLVAVVVAFFC).

This sequence belongs to the FMO family. It depends on FAD as a cofactor. Mg(2+) is required as a cofactor.

It localises to the microsome membrane. The protein resides in the endoplasmic reticulum membrane. The catalysed reaction is N,N-dimethylaniline + NADPH + O2 + H(+) = N,N-dimethylaniline N-oxide + NADP(+) + H2O. In terms of biological role, catalyzes the oxidative metabolism of numerous xenobiotics, including mainly therapeutic drugs and insecticides that contain a soft nucleophile, most commonly nitrogen and sulfur and participates to their bioactivation. This chain is Dimethylaniline monooxygenase [N-oxide-forming] 2, found in Macaca mulatta (Rhesus macaque).